The sequence spans 651 residues: MFVARRLSKNITQISKTAVKTSVRAVPVRGFKTTSVNQAAAPAPKTSQEKEYFEKNKSLLDKESNEESTEVDYSKLNENQGVVHQVIGAVVDVYFPHGKLPYINDALIVDDFQAENVEKVIEDLNNPSLKGKIDFNNVPISNIKLVLEVAQHLGDGIVRCVALDITDGLGRGALVLNTGSPLMVPVGQATLGRIMNVIGEPIDGCGPIPATEKRPIWRAPPPFADLAPSASILETGIKVIDLLAPYSRGGKIGLFGGAGVGKTVLIQELINNIAKAHGGFSVFTGVGERTREGNDLYHEMVEAGVIKKEGPGSKVALVFGQMNEPPGARARVTLTGLTVAEYFRDAEGQDVLLFIDNIFRFTQAGSEMSALLGRIPSAVGYQPTLATDMGCMQERIATTKKGSITSVQAVYVPADDLTDPAPATTFAHLDATTVLSRAISELGIYPCVDPLDSTSLMMDPNIIGVEHYKVATDVQKILQEYKSLQDIIAILGMDDLSEDQKATVFRARKIQRFLSQPFEVAHAFTNMEGRFVKLSDSIKAFKGILEGKYDHLPEAAFYMVGGIEDVEIKAAKLLESAGKEEKKTTTTSTTGQVKEETVREKVTRLVDEAYNAKVKKLKEYGASTAHLEELRAQYEKNFESEISQLEVLLKK.

A mitochondrion-targeting transit peptide spans 1 to 30 (MFVARRLSKNITQISKTAVKTSVRAVPVRG). Residues G259, V260, G261, K262, T263, and V264 each contribute to the ADP site. G259 provides a ligand contact to ATP. The phosphate site is built by G259, V260, G261, K262, and T263. ATP contacts are provided by G261, K262, T263, and V264. T263 is a binding site for Mg(2+). Mg(2+) is bound at residue E288. R289 serves as a coordination point for ATP.

Belongs to the ATPase alpha/beta chains family. In terms of assembly, homotrimer. Component of the ATP synthase complex composed at least of ATP5F1A/subunit alpha, ATP5F1B/subunit beta, ATP5MC1/subunit c (homooctomer), MT-ATP6/subunit a, MT-ATP8/subunit 8, ATP5ME/subunit e, ATP5MF/subunit f, ATP5MG/subunit g, ATP5MK/subunit k, ATP5MJ/subunit j, ATP5F1C/subunit gamma, ATP5F1D/subunit delta, ATP5F1E/subunit epsilon, ATP5PF/subunit F6, ATP5PB/subunit b, ATP5PD/subunit d, ATP5PO/subunit OSCP. ATP synthase complex consists of a soluble F(1) head domain (subunits alpha(3) and beta(3)) - the catalytic core - and a membrane F(0) domain - the membrane proton channel (subunits c, a, 8, e, f, g, k and j). These two domains are linked by a central stalk (subunits gamma, delta, and epsilon) rotating inside the F1 region and a stationary peripheral stalk (subunits F6, b, d, and OSCP).

Its subcellular location is the mitochondrion inner membrane. It carries out the reaction ATP + H2O + 4 H(+)(in) = ADP + phosphate + 5 H(+)(out). Catalytic subunit beta, of the mitochondrial membrane ATP synthase complex (F(1)F(0) ATP synthase or Complex V) that produces ATP from ADP in the presence of a proton gradient across the membrane which is generated by electron transport complexes of the respiratory chain. ATP synthase complex consist of a soluble F(1) head domain - the catalytic core - and a membrane F(1) domain - the membrane proton channel. These two domains are linked by a central stalk rotating inside the F(1) region and a stationary peripheral stalk. During catalysis, ATP synthesis in the catalytic domain of F(1) is coupled via a rotary mechanism of the central stalk subunits to proton translocation. In vivo, can only synthesize ATP although its ATP hydrolase activity can be activated artificially in vitro. With the subunit alpha (ATP5F1A), forms the catalytic core in the F(1) domain. The polypeptide is ATP synthase F(1) complex catalytic subunit beta, mitochondrial (Dictyostelium discoideum (Social amoeba)).